Reading from the N-terminus, the 344-residue chain is tRNA N6-adenosine threonylcarbamoyltransferase (344 aa).

Fe cation is bound by residues His111 and His115. Substrate is bound by residues 134 to 138 (LVSGG), Asp167, Gly180, and Asn274. A Fe cation-binding site is contributed by Asp302.

This sequence belongs to the KAE1 / TsaD family. The cofactor is Fe(2+).

Its subcellular location is the cytoplasm. The catalysed reaction is L-threonylcarbamoyladenylate + adenosine(37) in tRNA = N(6)-L-threonylcarbamoyladenosine(37) in tRNA + AMP + H(+). In terms of biological role, required for the formation of a threonylcarbamoyl group on adenosine at position 37 (t(6)A37) in tRNAs that read codons beginning with adenine. Is involved in the transfer of the threonylcarbamoyl moiety of threonylcarbamoyl-AMP (TC-AMP) to the N6 group of A37, together with TsaE and TsaB. TsaD likely plays a direct catalytic role in this reaction. The sequence is that of tRNA N6-adenosine threonylcarbamoyltransferase from Dechloromonas aromatica (strain RCB).